A 177-amino-acid chain; its full sequence is Protein-export protein SecB (177 aa).

It belongs to the SecB family. Homotetramer, a dimer of dimers. One homotetramer interacts with 1 SecA dimer.

The protein resides in the cytoplasm. One of the proteins required for the normal export of preproteins out of the cell cytoplasm. It is a molecular chaperone that binds to a subset of precursor proteins, maintaining them in a translocation-competent state. It also specifically binds to its receptor SecA. In Ehrlichia canis (strain Jake), this protein is Protein-export protein SecB.